The sequence spans 59 residues: Large ribosomal subunit protein bL32 (59 aa).

Over residues 1–15 the composition is skewed to basic residues; that stretch reads MAVPKKKTSKSKRDM. Residues 1–26 form a disordered region; it reads MAVPKKKTSKSKRDMRRATWNRKAAA.

The protein belongs to the bacterial ribosomal protein bL32 family.

This is Large ribosomal subunit protein bL32 from Cyanothece sp. (strain PCC 7425 / ATCC 29141).